We begin with the raw amino-acid sequence, 337 residues long: MSGFYHKHFLKLLDFTPAELNSLLQLAAKLKADKKSGKEEAKLTGKNIALIFEKDSTRTRCSFEVAAYDQGARVTYLGPSGSQIGHKESIKDTARVLGRMYDGIQYRGYGQEIVETLAEYAGVPVWNGLTNEFHPTQLLADLLTMQEHLPGKAFNEMTLVYAGDARNNMGNSMLEAAALTGLDLRLVAPQACWPEAALVTECRAQAQQNGGNITLTEDVAKGVEGADFIYTDVWVSMGEAKEKWAERIALLRDYQVNSKMMQLTGNPEVKFLHCLPAFHDDQTTLGKKMAEEFGLHGGMEVTDEVFESAASIVFDQAENRMHTIKAVMVATLSKLNN.

Residues 56-59, Q83, R107, and 134-137 each bind carbamoyl phosphate; these read STRT and HPTQ. L-ornithine-binding positions include N168, D232, and 236 to 237; that span reads SM. Carbamoyl phosphate contacts are provided by residues 274–275 and R320; that span reads CL.

This sequence belongs to the aspartate/ornithine carbamoyltransferase superfamily. OTCase family.

The protein localises to the cytoplasm. It catalyses the reaction carbamoyl phosphate + L-ornithine = L-citrulline + phosphate + H(+). Its pathway is amino-acid biosynthesis; L-arginine biosynthesis; L-arginine from L-ornithine and carbamoyl phosphate: step 1/3. In terms of biological role, reversibly catalyzes the transfer of the carbamoyl group from carbamoyl phosphate (CP) to the N(epsilon) atom of ornithine (ORN) to produce L-citrulline. This chain is Ornithine carbamoyltransferase, found in Shigella flexneri serotype 5b (strain 8401).